The chain runs to 363 residues: MIIDTSQVQDIHSFSRLEFLKEFYGILWVLVPILTTVLGITIGVLVIVWLEREISAGIQQRIGPEYAGPLGVLQALADGTKLLFKENLLPSRGDTRLFSIGPSIAVISILLSYSVIPFGYRLVLADLPIGVFLWIAISSVAPIGLLMSGYGSNNKYSFLGGLRAAAQSISYEIPLTLCVLSISLLSNSSSTVDIVEAQSKYGFWGWNLWRQPIGFVIFLISSLAECERLPFDLPEAEEELVAGYQTEYSGIKFGLFYVASYLNLLVSSLFVTVLYLGGWDISIPYILGYELFEINKVYEVFGMTISIFITLAKTYLFLFISIATRWTLPRLRIDQLLNLGWKFLLPISLGNLLLTTSFQLFSL.

The next 6 helical transmembrane spans lie at 28–48 (WVLV…LVIV), 98–118 (FSIG…VIPF), 127–147 (LPIG…GLLM), 248–268 (YSGI…LVSS), 300–320 (VFGM…FLFI), and 343–363 (FLLP…LFSL).

This sequence belongs to the complex I subunit 1 family. NDH is composed of at least 16 different subunits, 5 of which are encoded in the nucleus.

The protein resides in the plastid. The protein localises to the chloroplast thylakoid membrane. The enzyme catalyses a plastoquinone + NADH + (n+1) H(+)(in) = a plastoquinol + NAD(+) + n H(+)(out). It carries out the reaction a plastoquinone + NADPH + (n+1) H(+)(in) = a plastoquinol + NADP(+) + n H(+)(out). Functionally, NDH shuttles electrons from NAD(P)H:plastoquinone, via FMN and iron-sulfur (Fe-S) centers, to quinones in the photosynthetic chain and possibly in a chloroplast respiratory chain. The immediate electron acceptor for the enzyme in this species is believed to be plastoquinone. Couples the redox reaction to proton translocation, and thus conserves the redox energy in a proton gradient. The polypeptide is NAD(P)H-quinone oxidoreductase subunit 1, chloroplastic (Cucumis sativus (Cucumber)).